Reading from the N-terminus, the 813-residue chain is DNA ligase (813 aa).

Residues 41 to 45, 90 to 91, and Glu127 contribute to the NAD(+) site; these read DAEYD and SI. Catalysis depends on Lys129, which acts as the N6-AMP-lysine intermediate. Positions 150, 189, 307, and 331 each coordinate NAD(+). Residues Cys440, Cys443, Cys458, and Cys464 each contribute to the Zn(2+) site. The BRCT domain occupies 729-813; sequence AEEGALSGKT…LLQNPPGDSA (85 aa).

Belongs to the NAD-dependent DNA ligase family. LigA subfamily. The cofactor is Mg(2+). Mn(2+) is required as a cofactor.

The catalysed reaction is NAD(+) + (deoxyribonucleotide)n-3'-hydroxyl + 5'-phospho-(deoxyribonucleotide)m = (deoxyribonucleotide)n+m + AMP + beta-nicotinamide D-nucleotide.. DNA ligase that catalyzes the formation of phosphodiester linkages between 5'-phosphoryl and 3'-hydroxyl groups in double-stranded DNA using NAD as a coenzyme and as the energy source for the reaction. It is essential for DNA replication and repair of damaged DNA. The polypeptide is DNA ligase (Ralstonia nicotianae (strain ATCC BAA-1114 / GMI1000) (Ralstonia solanacearum)).